The sequence spans 956 residues: UvrABC system protein A (956 aa).

Residue 33 to 40 (GLSGSGKS) participates in ATP binding. The segment at 252-279 (CPYCGFSVGELEPRMFSFNSPFGACPTC) adopts a C4-type zinc-finger fold. ABC transporter domains are found at residues 309-587 (WRPI…KNSI) and 607-936 (GNGL…KYLK). Residue 639 to 646 (GVSGSGKS) coordinates ATP. Residues 738–764 (CEACKGDGIIKIEMHFLPDVYVPCEVC) form a C4-type zinc finger.

The protein belongs to the ABC transporter superfamily. UvrA family. Forms a heterotetramer with UvrB during the search for lesions.

The protein localises to the cytoplasm. Its function is as follows. The UvrABC repair system catalyzes the recognition and processing of DNA lesions. UvrA is an ATPase and a DNA-binding protein. A damage recognition complex composed of 2 UvrA and 2 UvrB subunits scans DNA for abnormalities. When the presence of a lesion has been verified by UvrB, the UvrA molecules dissociate. The sequence is that of UvrABC system protein A from Listeria monocytogenes serotype 4b (strain F2365).